Consider the following 1071-residue polypeptide: ATP-dependent helicase/deoxyribonuclease subunit B (1071 aa).

Belongs to the helicase family. AddB/RexB type 2 subfamily. In terms of assembly, heterodimer of AddA and RexB. It depends on Mg(2+) as a cofactor.

Functionally, the heterodimer acts as both an ATP-dependent DNA helicase and an ATP-dependent, dual-direction single-stranded exonuclease. Recognizes the chi site generating a DNA molecule suitable for the initiation of homologous recombination. This subunit has 5' -&gt; 3' nuclease activity but not helicase activity. The sequence is that of ATP-dependent helicase/deoxyribonuclease subunit B from Streptococcus pyogenes serotype M49 (strain NZ131).